The following is a 177-amino-acid chain: Adenine phosphoribosyltransferase (177 aa).

Belongs to the purine/pyrimidine phosphoribosyltransferase family. Homodimer.

The protein localises to the cytoplasm. It catalyses the reaction AMP + diphosphate = 5-phospho-alpha-D-ribose 1-diphosphate + adenine. The protein operates within purine metabolism; AMP biosynthesis via salvage pathway; AMP from adenine: step 1/1. Its function is as follows. Catalyzes a salvage reaction resulting in the formation of AMP, that is energically less costly than de novo synthesis. The polypeptide is Adenine phosphoribosyltransferase (Leptospira interrogans serogroup Icterohaemorrhagiae serovar copenhageni (strain Fiocruz L1-130)).